Reading from the N-terminus, the 447-residue chain is MTTILKHLPAGQRIGIAFSGGLDTSAALLWMRQKGAVPYAYTANLGQPDEDDYDAIPRRAMEYGAENARLIDCRKQLVAEGIAAIQCGAFHNTTGGLTYFNTTPLGRAVTGTMLVAAMKEDGVNIWGDGSTYKGNDIERFYRYGLLTNAELQIYKPWLDTDFIDELGGRHEMSEFMIACGFDYKMSVEKAYSTDSNMLGATHEAKDLEFLNSSVKIVNPIMGVKFWDESVKIPAEVVTVRFEQGHPVALNGKTFSDDVEMMLEANRIGGRHGLGMSDQIENRIIEAKSRGIYEAPGMALLHIAYERLLTGIHNEDTIEQYHSHGRQLGKLLYQGRWFDSQALMLRDGLQRWVASQITGEVTLELRRGNDYSILNTVSDNLTYKPERLTMEKGDSVFSPDDRIGQLTMRNLDITDTREKLFGYAKAGLLTASSATGLPQVENLENKAK.

ATP is bound by residues 17–25 and alanine 43; that span reads AFSGGLDTS. Tyrosine 99 is a binding site for L-citrulline. Positions 129 and 131 each coordinate ATP. L-aspartate is bound by residues threonine 131, asparagine 135, and aspartate 136. L-citrulline is bound at residue asparagine 135. Aspartate 136 lines the ATP pocket. The L-citrulline site is built by arginine 139 and serine 192. Aspartate 194 is an ATP binding site. Residues threonine 201, glutamate 203, and glutamate 280 each coordinate L-citrulline.

This sequence belongs to the argininosuccinate synthase family. Type 2 subfamily. As to quaternary structure, homotetramer.

It is found in the cytoplasm. The catalysed reaction is L-citrulline + L-aspartate + ATP = 2-(N(omega)-L-arginino)succinate + AMP + diphosphate + H(+). The protein operates within amino-acid biosynthesis; L-arginine biosynthesis; L-arginine from L-ornithine and carbamoyl phosphate: step 2/3. The chain is Argininosuccinate synthase from Salmonella paratyphi B (strain ATCC BAA-1250 / SPB7).